The following is a 472-amino-acid chain: Adenosylhomocysteinase (472 aa).

Substrate is bound by residues threonine 60, aspartate 136, and glutamate 197. 198-200 is a binding site for NAD(+); sequence TTT. The substrate site is built by lysine 227 and aspartate 231. NAD(+)-binding positions include asparagine 232, 261–266, glutamate 284, asparagine 319, 340–342, and asparagine 388; these read GYGDVG and IGH.

The protein belongs to the adenosylhomocysteinase family. NAD(+) is required as a cofactor.

Its subcellular location is the cytoplasm. The catalysed reaction is S-adenosyl-L-homocysteine + H2O = L-homocysteine + adenosine. The protein operates within amino-acid biosynthesis; L-homocysteine biosynthesis; L-homocysteine from S-adenosyl-L-homocysteine: step 1/1. In terms of biological role, may play a key role in the regulation of the intracellular concentration of adenosylhomocysteine. The chain is Adenosylhomocysteinase from Maridesulfovibrio salexigens (strain ATCC 14822 / DSM 2638 / NCIMB 8403 / VKM B-1763) (Desulfovibrio salexigens).